Here is a 215-residue protein sequence, read N- to C-terminus: Glycerol-3-phosphate acyltransferase (215 aa).

6 consecutive transmembrane segments (helical) span residues leucine 3–glycine 23, threonine 42–isoleucine 61, threonine 68–leucine 90, alanine 110–leucine 130, leucine 134–leucine 154, and leucine 162–isoleucine 182.

It belongs to the PlsY family. Probably interacts with PlsX.

It is found in the cell membrane. It catalyses the reaction an acyl phosphate + sn-glycerol 3-phosphate = a 1-acyl-sn-glycero-3-phosphate + phosphate. It participates in lipid metabolism; phospholipid metabolism. In terms of biological role, catalyzes the transfer of an acyl group from acyl-phosphate (acyl-PO(4)) to glycerol-3-phosphate (G3P) to form lysophosphatidic acid (LPA). This enzyme utilizes acyl-phosphate as fatty acyl donor, but not acyl-CoA or acyl-ACP. The sequence is that of Glycerol-3-phosphate acyltransferase from Streptococcus equi subsp. zooepidemicus (strain MGCS10565).